Reading from the N-terminus, the 481-residue chain is Beta-amyrin 16-beta-monooxygenase (481 aa).

Residues Leu4 to Leu24 form a helical membrane-spanning segment. Cys428 is a binding site for heme.

The protein belongs to the cytochrome P450 family. Heme serves as cofactor. In terms of tissue distribution, highly expressed in roots. Expressed at very low levels in leaves and petals.

Its subcellular location is the membrane. The catalysed reaction is beta-amyrin + reduced [NADPH--hemoprotein reductase] + O2 = maniladiol + oxidized [NADPH--hemoprotein reductase] + H2O + H(+). It catalyses the reaction oleanolate + reduced [NADPH--hemoprotein reductase] + O2 = cochalate + oxidized [NADPH--hemoprotein reductase] + H2O + H(+). In terms of biological role, involved in triterpenoid saponin biosynthesis in roots. Catalyzes the hydroxylation of beta-amyrin at the C-16 beta position to form maniladiol. Is also able to oxidize oleanolat to cochalate. Has weak activity catalyzing the three-step oxidation at C-28 of beta-amyrin to form oleanolate. The polypeptide is Beta-amyrin 16-beta-monooxygenase (Platycodon grandiflorus (Balloon flower)).